A 395-amino-acid polypeptide reads, in one-letter code: Elongation factor Tu (395 aa).

The tr-type G domain maps to 10–204 (KPHVNIGTIG…AVDEYIPTPQ (195 aa)). The G1 stretch occupies residues 19-26 (GHVDHGKT). GTP is bound at residue 19-26 (GHVDHGKT). Thr26 serves as a coordination point for Mg(2+). The G2 stretch occupies residues 60-64 (GITIS). A G3 region spans residues 81–84 (DCPG). GTP-binding positions include 81 to 85 (DCPGH) and 136 to 139 (NKCD). The segment at 136 to 139 (NKCD) is G4. Residues 174–176 (SAL) form a G5 region.

This sequence belongs to the TRAFAC class translation factor GTPase superfamily. Classic translation factor GTPase family. EF-Tu/EF-1A subfamily. In terms of assembly, monomer.

The protein resides in the cytoplasm. The catalysed reaction is GTP + H2O = GDP + phosphate + H(+). GTP hydrolase that promotes the GTP-dependent binding of aminoacyl-tRNA to the A-site of ribosomes during protein biosynthesis. This Geobacillus stearothermophilus (Bacillus stearothermophilus) protein is Elongation factor Tu.